The following is a 267-amino-acid chain: Putative B3 domain-containing protein LOC_Os07g12820 (267 aa).

Positions 4-99 form a DNA-binding region, TF-B3; the sequence is PTFSMVKIKT…RLNVIIFNKE (96 aa).

The protein localises to the nucleus. In Oryza sativa subsp. japonica (Rice), this protein is Putative B3 domain-containing protein LOC_Os07g12820.